Consider the following 275-residue polypeptide: Glycerol-3-phosphate dehydrogenase [NAD(P)+] (275 aa).

NADPH is bound by residues tryptophan 12, arginine 32, and lysine 105. Sn-glycerol 3-phosphate-binding residues include lysine 105, glycine 133, and threonine 135. Residue alanine 137 participates in NADPH binding. Residues lysine 188, aspartate 241, serine 251, arginine 252, and asparagine 253 each coordinate sn-glycerol 3-phosphate. The active-site Proton acceptor is the lysine 188. Arginine 252 contributes to the NADPH binding site.

It belongs to the NAD-dependent glycerol-3-phosphate dehydrogenase family.

It is found in the cytoplasm. It catalyses the reaction sn-glycerol 3-phosphate + NAD(+) = dihydroxyacetone phosphate + NADH + H(+). It carries out the reaction sn-glycerol 3-phosphate + NADP(+) = dihydroxyacetone phosphate + NADPH + H(+). Its pathway is membrane lipid metabolism; glycerophospholipid metabolism. In terms of biological role, catalyzes the reduction of the glycolytic intermediate dihydroxyacetone phosphate (DHAP) to sn-glycerol 3-phosphate (G3P), the key precursor for phospholipid synthesis. The chain is Glycerol-3-phosphate dehydrogenase [NAD(P)+] from Paramagnetospirillum magneticum (strain ATCC 700264 / AMB-1) (Magnetospirillum magneticum).